Reading from the N-terminus, the 231-residue chain is Putative histone H1.9 (231 aa).

Residues 113 to 177 enclose the H15 domain; it reads QKPSTSKVIL…GSAGSFTLGK (65 aa). Ser135 carries the post-translational modification Phosphoserine. Residues 177 to 214 are disordered; the sequence is KKQASKSKLKVKRQRQQRWRSGQRPFGQHRSLLGSKQG. Residues 179–194 show a composition bias toward basic residues; that stretch reads QASKSKLKVKRQRQQR.

Belongs to the histone H1/H5 family. As to expression, expressed exclusively in the testis.

The protein localises to the nucleus. It localises to the chromosome. DNA-binding protein that may be implicated in chromatin remodeling and/or transcriptional regulation during spermiogenesis, the process of spermatid maturation into spermatozoa. This Homo sapiens (Human) protein is Putative histone H1.9.